Here is a 264-residue protein sequence, read N- to C-terminus: Tryptophan synthase alpha chain (264 aa).

Residues glutamate 44 and aspartate 55 each act as proton acceptor in the active site.

The protein belongs to the TrpA family. As to quaternary structure, tetramer of two alpha and two beta chains.

It catalyses the reaction (1S,2R)-1-C-(indol-3-yl)glycerol 3-phosphate + L-serine = D-glyceraldehyde 3-phosphate + L-tryptophan + H2O. Its pathway is amino-acid biosynthesis; L-tryptophan biosynthesis; L-tryptophan from chorismate: step 5/5. The alpha subunit is responsible for the aldol cleavage of indoleglycerol phosphate to indole and glyceraldehyde 3-phosphate. This Lactiplantibacillus plantarum (strain ATCC BAA-793 / NCIMB 8826 / WCFS1) (Lactobacillus plantarum) protein is Tryptophan synthase alpha chain.